Here is a 729-residue protein sequence, read N- to C-terminus: Fatty acid oxidation complex subunit alpha (729 aa).

Residues 1–189 (MLYKGDTLYL…KIGLVDGVVK (189 aa)) form an enoyl-CoA hydratase/isomerase region. Asp-296 is a substrate binding site. Residues 311–729 (ETPKQAAVLG…ARPVGDLKTA (419 aa)) form a 3-hydroxyacyl-CoA dehydrogenase region. NAD(+) is bound by residues Met-324, Asp-343, 400-402 (VVE), Lys-407, and Ser-429. His-450 functions as the For 3-hydroxyacyl-CoA dehydrogenase activity in the catalytic mechanism. Asn-453 contributes to the NAD(+) binding site. Residues Asn-500 and Tyr-660 each contribute to the substrate site. Residues 708 to 729 (RHNEPYYPPVEPARPVGDLKTA) are disordered.

It in the N-terminal section; belongs to the enoyl-CoA hydratase/isomerase family. This sequence in the C-terminal section; belongs to the 3-hydroxyacyl-CoA dehydrogenase family. As to quaternary structure, heterotetramer of two alpha chains (FadB) and two beta chains (FadA).

It carries out the reaction a (3S)-3-hydroxyacyl-CoA + NAD(+) = a 3-oxoacyl-CoA + NADH + H(+). It catalyses the reaction a (3S)-3-hydroxyacyl-CoA = a (2E)-enoyl-CoA + H2O. The catalysed reaction is a 4-saturated-(3S)-3-hydroxyacyl-CoA = a (3E)-enoyl-CoA + H2O. The enzyme catalyses (3S)-3-hydroxybutanoyl-CoA = (3R)-3-hydroxybutanoyl-CoA. It carries out the reaction a (3Z)-enoyl-CoA = a 4-saturated (2E)-enoyl-CoA. It catalyses the reaction a (3E)-enoyl-CoA = a 4-saturated (2E)-enoyl-CoA. It participates in lipid metabolism; fatty acid beta-oxidation. Involved in the aerobic and anaerobic degradation of long-chain fatty acids via beta-oxidation cycle. Catalyzes the formation of 3-oxoacyl-CoA from enoyl-CoA via L-3-hydroxyacyl-CoA. It can also use D-3-hydroxyacyl-CoA and cis-3-enoyl-CoA as substrate. This Escherichia coli O7:K1 (strain IAI39 / ExPEC) protein is Fatty acid oxidation complex subunit alpha.